The following is a 338-amino-acid chain: Serpentine receptor class alpha-31 (338 aa).

7 helical membrane-spanning segments follow: residues 23–43 (GNHC…VFAI), 59–79 (LLFS…GIRI), 108–125 (LYYY…SLFF), 142–162 (FSKI…YWIF), 188–208 (VNEF…VIFF), 240–260 (VCII…TTEI), and 276–296 (SIAF…IIIY).

This sequence belongs to the nematode receptor-like protein sra family.

The protein resides in the membrane. The polypeptide is Serpentine receptor class alpha-31 (sra-31) (Caenorhabditis elegans).